The chain runs to 280 residues: Hydroxyethylthiazole kinase (280 aa).

Met-50 provides a ligand contact to substrate. ATP contacts are provided by Lys-125 and Thr-178. Gly-205 provides a ligand contact to substrate.

It belongs to the Thz kinase family. Requires Mg(2+) as cofactor.

It carries out the reaction 5-(2-hydroxyethyl)-4-methylthiazole + ATP = 4-methyl-5-(2-phosphooxyethyl)-thiazole + ADP + H(+). The protein operates within cofactor biosynthesis; thiamine diphosphate biosynthesis; 4-methyl-5-(2-phosphoethyl)-thiazole from 5-(2-hydroxyethyl)-4-methylthiazole: step 1/1. Its function is as follows. Catalyzes the phosphorylation of the hydroxyl group of 4-methyl-5-beta-hydroxyethylthiazole (THZ). The protein is Hydroxyethylthiazole kinase of Lacticaseibacillus paracasei (strain ATCC 334 / BCRC 17002 / CCUG 31169 / CIP 107868 / KCTC 3260 / NRRL B-441) (Lactobacillus paracasei).